A 397-amino-acid polypeptide reads, in one-letter code: Iron-sulfur cluster assembly SufBD family protein Rv1462 (397 aa).

An N-acetylthreonine modification is found at Thr2.

The protein belongs to the iron-sulfur cluster assembly SufBD family.

This is Iron-sulfur cluster assembly SufBD family protein Rv1462 from Mycobacterium tuberculosis (strain ATCC 25618 / H37Rv).